Reading from the N-terminus, the 367-residue chain is Flagellar P-ring protein (367 aa).

Residues 1–22 (MRRMLVIRWILAIHLIATQVFA) form the signal peptide.

Belongs to the FlgI family. The basal body constitutes a major portion of the flagellar organelle and consists of four rings (L,P,S, and M) mounted on a central rod.

The protein resides in the periplasm. Its subcellular location is the bacterial flagellum basal body. Its function is as follows. Assembles around the rod to form the L-ring and probably protects the motor/basal body from shearing forces during rotation. This is Flagellar P-ring protein from Legionella pneumophila (strain Corby).